A 173-amino-acid chain; its full sequence is Galactose-6-phosphate isomerase subunit LacB (173 aa).

This sequence belongs to the LacAB/RpiB family. Heteromultimeric protein consisting of LacA and LacB.

The enzyme catalyses aldehydo-D-galactose 6-phosphate = keto-D-tagatose 6-phosphate. It functions in the pathway carbohydrate metabolism; D-galactose 6-phosphate degradation; D-tagatose 6-phosphate from D-galactose 6-phosphate: step 1/1. The protein is Galactose-6-phosphate isomerase subunit LacB of Clostridium acetobutylicum (strain ATCC 824 / DSM 792 / JCM 1419 / IAM 19013 / LMG 5710 / NBRC 13948 / NRRL B-527 / VKM B-1787 / 2291 / W).